A 1159-amino-acid polypeptide reads, in one-letter code: Ferroxidase HEPHL1 (1159 aa).

Residues 1 to 23 (MFLKQPGGCILLQFLGLLGLVGA) form the signal peptide. Plastocyanin-like domains are found at residues 24–206 (VTRT…LLVC), 217–365 (MRTD…VGNC), 378–560 (QRRY…LLVC), 570–718 (TQKG…ISSC), 730–906 (MLRT…LITC), and 914–1092 (KGRR…VPSQ). Residues 24-1114 (VTRTYYIGIV…KNLRPRGAKA (1091 aa)) are Extracellular-facing. His-126 and His-128 together coordinate Cu cation. Residue Asn-160 is glycosylated (N-linked (GlcNAc...) asparagine). Residues Cys-180 and Cys-206 are joined by a disulfide bond. Cu cation contacts are provided by His-186 and His-188. Residue Asn-235 is glycosylated (N-linked (GlcNAc...) asparagine). Cys-284 and Cys-365 are oxidised to a cystine. His-303, Cys-346, and His-351 together coordinate Cu cation. Asn-406 carries an N-linked (GlcNAc...) asparagine glycan. A disulfide bond links Cys-534 and Cys-560. N-linked (GlcNAc...) asparagine glycosylation is present at Asn-588. An intrachain disulfide couples Cys-637 to Cys-718. His-656, Cys-699, His-704, and Met-709 together coordinate Cu cation. Asn-771 carries an N-linked (GlcNAc...) asparagine glycan. A disulfide bond links Cys-880 and Cys-906. N-linked (GlcNAc...) asparagine glycosylation occurs at Asn-934. Cu cation contacts are provided by His-1002, His-1005, His-1007, His-1047, Cys-1048, His-1049, His-1053, and Met-1058. Residues 1115 to 1135 (ALVILFILGLLLLVATVVLAL) traverse the membrane as a helical segment. Topologically, residues 1136-1159 (RLRSSRRQMAYREVQSCALPTDAL) are cytoplasmic.

The protein belongs to the multicopper oxidase family. Requires Cu cation as cofactor.

Its subcellular location is the membrane. The enzyme catalyses 4 Fe(2+) + O2 + 4 H(+) = 4 Fe(3+) + 2 H2O. Its function is as follows. Is a copper-binding glycoprotein with ferroxidase activity. It oxidizes Fe(2+) to Fe(3+) without releasing radical oxygen species. May be involved in the regulation of intracellular iron content. The sequence is that of Ferroxidase HEPHL1 (Hephl1) from Mus musculus (Mouse).